Here is a 227-residue protein sequence, read N- to C-terminus: 7-cyano-7-deazaguanine synthase (227 aa).

Residue 8–18 (VSGGADSATVL) coordinates ATP. Zn(2+) is bound by residues cysteine 192, cysteine 202, cysteine 205, and cysteine 208.

This sequence belongs to the QueC family. Requires Zn(2+) as cofactor.

The enzyme catalyses 7-carboxy-7-deazaguanine + NH4(+) + ATP = 7-cyano-7-deazaguanine + ADP + phosphate + H2O + H(+). The protein operates within purine metabolism; 7-cyano-7-deazaguanine biosynthesis. Functionally, catalyzes the ATP-dependent conversion of 7-carboxy-7-deazaguanine (CDG) to 7-cyano-7-deazaguanine (preQ(0)). The chain is 7-cyano-7-deazaguanine synthase from Rickettsia canadensis (strain McKiel).